A 272-amino-acid chain; its full sequence is Shikimate dehydrogenase (NADP(+)) (272 aa).

Shikimate contacts are provided by residues 14–16 (SKS) and Thr61. Lys65 functions as the Proton acceptor in the catalytic mechanism. Glu77 lines the NADP(+) pocket. Residues Asn86 and Asp102 each coordinate shikimate. NADP(+)-binding positions include 126 to 130 (GAGGA), 149 to 154 (NRTVSR), and Met213. Tyr215 is a shikimate binding site. NADP(+) is bound at residue Gly237.

This sequence belongs to the shikimate dehydrogenase family. In terms of assembly, homodimer.

The catalysed reaction is shikimate + NADP(+) = 3-dehydroshikimate + NADPH + H(+). The protein operates within metabolic intermediate biosynthesis; chorismate biosynthesis; chorismate from D-erythrose 4-phosphate and phosphoenolpyruvate: step 4/7. Its function is as follows. Involved in the biosynthesis of the chorismate, which leads to the biosynthesis of aromatic amino acids. Catalyzes the reversible NADPH linked reduction of 3-dehydroshikimate (DHSA) to yield shikimate (SA). In Escherichia coli O157:H7, this protein is Shikimate dehydrogenase (NADP(+)).